Here is a 205-residue protein sequence, read N- to C-terminus: Guanylate kinase (205 aa).

A Guanylate kinase-like domain is found at 6–185; it reads GLLIVLSRPS…ACDRIKAIVV (180 aa). 13–20 provides a ligand contact to ATP; it reads RPSGVGKG.

It belongs to the guanylate kinase family.

Its subcellular location is the cytoplasm. The enzyme catalyses GMP + ATP = GDP + ADP. In terms of biological role, essential for recycling GMP and indirectly, cGMP. In Bacillus cereus (strain ATCC 14579 / DSM 31 / CCUG 7414 / JCM 2152 / NBRC 15305 / NCIMB 9373 / NCTC 2599 / NRRL B-3711), this protein is Guanylate kinase.